Reading from the N-terminus, the 293-residue chain is Energy-coupling factor transporter ATP-binding protein EcfA2 (293 aa).

The ABC transporter domain maps to 3–246 (ITFQKVEHRY…ADELEKIGVD (244 aa)). 40-47 (GHTGSGKS) provides a ligand contact to ATP.

It belongs to the ABC transporter superfamily. Energy-coupling factor EcfA family. In terms of assembly, forms a stable energy-coupling factor (ECF) transporter complex composed of 2 membrane-embedded substrate-binding proteins (S component), 2 ATP-binding proteins (A component) and 2 transmembrane proteins (T component).

The protein localises to the cell membrane. In terms of biological role, ATP-binding (A) component of a common energy-coupling factor (ECF) ABC-transporter complex. Unlike classic ABC transporters this ECF transporter provides the energy necessary to transport a number of different substrates. This chain is Energy-coupling factor transporter ATP-binding protein EcfA2, found in Bacillus cereus (strain ATCC 14579 / DSM 31 / CCUG 7414 / JCM 2152 / NBRC 15305 / NCIMB 9373 / NCTC 2599 / NRRL B-3711).